The following is a 391-amino-acid chain: Multidrug resistance protein MdtL (391 aa).

Over 1-3 (MSR) the chain is Cytoplasmic. The helical transmembrane segment at 4 to 24 (FLICSFALVLLYPAGIDMYLV) threads the bilayer. Topologically, residues 25–37 (GLPRIAADLNASE) are periplasmic. Residues 38-58 (AQLHIAFSVYLAGMAAAMLFA) traverse the membrane as a helical segment. At 59–75 (GKMADRSGRKPVAIPGS) the chain is on the cytoplasmic side. The chain crosses the membrane as a helical span at residues 76 to 96 (ALFIIASVFCSLAETSTLFLA). At 97-98 (GR) the chain is on the periplasmic side. Residues 99–119 (FLQGLGAGCCYVVAFAILRDT) form a helical membrane-spanning segment. Residues 120 to 130 (LDDRRRAKVLS) lie on the Cytoplasmic side of the membrane. A helical membrane pass occupies residues 131–151 (LLNGITCIIPVLAPVLGHLIM). Topologically, residues 152 to 157 (LKFPWQ) are periplasmic. Residues 158–178 (SLFWAMAMMGIAVLMLSLFIL) traverse the membrane as a helical segment. Over 179–202 (KETRPASPAASDKPRENSESLLNR) the chain is Cytoplasmic. A helical transmembrane segment spans residues 203–222 (FFLSRVVITTLSVSVILTFV). The Periplasmic segment spans residues 223–244 (NTSPVLLMEIMGFERGEYATIM). A helical membrane pass occupies residues 245–265 (ALTAGVSMTFSFSTPFALGIF). Over 266-268 (KPR) the chain is Cytoplasmic. Residues 269–289 (TLMITSQVLFLAAGITLAVSP) traverse the membrane as a helical segment. At 290-292 (SHA) the chain is on the periplasmic side. Residues 293–313 (VSLFGITLICAGFSVGFGVAM) traverse the membrane as a helical segment. Residues 314 to 330 (SQALGPFSLRAGVASST) are Cytoplasmic-facing. The helical transmembrane segment at 331-351 (LGIAQVCGSSLWIWLAAVVGI) threads the bilayer. The Periplasmic segment spans residues 352 to 355 (GAWN). The helical transmembrane segment at 356–376 (MLIGILIACSIVSLLLIMFVA) threads the bilayer. Topologically, residues 377–391 (PGRPVAAHEEIHHHA) are cytoplasmic.

This sequence belongs to the major facilitator superfamily. DHA1 family. MdtL (TC 2.A.1.2.22) subfamily.

Its subcellular location is the cell inner membrane. This Shigella flexneri serotype 5b (strain 8401) protein is Multidrug resistance protein MdtL.